We begin with the raw amino-acid sequence, 514 residues long: Peptide chain release factor 3 (514 aa).

The tr-type G domain occupies 8 to 268 (KKRRTFAIIS…TFLKFAPEPH (261 aa)). GTP-binding positions include 17–24 (SHPDAGKT), 85–89 (DTPGH), and 139–142 (NKLD).

Belongs to the TRAFAC class translation factor GTPase superfamily. Classic translation factor GTPase family. PrfC subfamily.

The protein resides in the cytoplasm. Functionally, increases the formation of ribosomal termination complexes and stimulates activities of RF-1 and RF-2. It binds guanine nucleotides and has strong preference for UGA stop codons. It may interact directly with the ribosome. The stimulation of RF-1 and RF-2 is significantly reduced by GTP and GDP, but not by GMP. The chain is Peptide chain release factor 3 from Streptococcus sanguinis (strain SK36).